We begin with the raw amino-acid sequence, 104 residues long: Large ribosomal subunit protein uL24 (104 aa).

The protein belongs to the universal ribosomal protein uL24 family. In terms of assembly, part of the 50S ribosomal subunit.

In terms of biological role, one of two assembly initiator proteins, it binds directly to the 5'-end of the 23S rRNA, where it nucleates assembly of the 50S subunit. One of the proteins that surrounds the polypeptide exit tunnel on the outside of the subunit. This is Large ribosomal subunit protein uL24 from Aliivibrio fischeri (strain ATCC 700601 / ES114) (Vibrio fischeri).